The sequence spans 147 residues: UPF0178 protein AFE_3267 (147 aa).

It belongs to the UPF0178 family.

In Acidithiobacillus ferrooxidans (strain ATCC 23270 / DSM 14882 / CIP 104768 / NCIMB 8455) (Ferrobacillus ferrooxidans (strain ATCC 23270)), this protein is UPF0178 protein AFE_3267.